A 315-amino-acid chain; its full sequence is Lipoyl synthase (315 aa).

The [4Fe-4S] cluster site is built by Cys-62, Cys-67, Cys-73, Cys-88, Cys-92, Cys-95, and Ser-302. Residues 73–291 (CFGHGTATFM…GELAKKLGFS (219 aa)) enclose the Radical SAM core domain.

It belongs to the radical SAM superfamily. Lipoyl synthase family. [4Fe-4S] cluster serves as cofactor.

The protein localises to the cytoplasm. The catalysed reaction is [[Fe-S] cluster scaffold protein carrying a second [4Fe-4S](2+) cluster] + N(6)-octanoyl-L-lysyl-[protein] + 2 oxidized [2Fe-2S]-[ferredoxin] + 2 S-adenosyl-L-methionine + 4 H(+) = [[Fe-S] cluster scaffold protein] + N(6)-[(R)-dihydrolipoyl]-L-lysyl-[protein] + 4 Fe(3+) + 2 hydrogen sulfide + 2 5'-deoxyadenosine + 2 L-methionine + 2 reduced [2Fe-2S]-[ferredoxin]. The protein operates within protein modification; protein lipoylation via endogenous pathway; protein N(6)-(lipoyl)lysine from octanoyl-[acyl-carrier-protein]: step 2/2. Functionally, catalyzes the radical-mediated insertion of two sulfur atoms into the C-6 and C-8 positions of the octanoyl moiety bound to the lipoyl domains of lipoate-dependent enzymes, thereby converting the octanoylated domains into lipoylated derivatives. The chain is Lipoyl synthase from Coxiella burnetii (strain Dugway 5J108-111).